We begin with the raw amino-acid sequence, 401 residues long: Nicotinate phosphoribosyltransferase (401 aa).

The residue at position 221 (H221) is a Phosphohistidine; by autocatalysis.

It belongs to the NAPRTase family. In terms of processing, transiently phosphorylated on a His residue during the reaction cycle. Phosphorylation strongly increases the affinity for substrates and increases the rate of nicotinate D-ribonucleotide production. Dephosphorylation regenerates the low-affinity form of the enzyme, leading to product release.

The catalysed reaction is nicotinate + 5-phospho-alpha-D-ribose 1-diphosphate + ATP + H2O = nicotinate beta-D-ribonucleotide + ADP + phosphate + diphosphate. The protein operates within cofactor biosynthesis; NAD(+) biosynthesis; nicotinate D-ribonucleotide from nicotinate: step 1/1. Its function is as follows. Catalyzes the synthesis of beta-nicotinate D-ribonucleotide from nicotinate and 5-phospho-D-ribose 1-phosphate at the expense of ATP. This Yersinia enterocolitica serotype O:8 / biotype 1B (strain NCTC 13174 / 8081) protein is Nicotinate phosphoribosyltransferase.